We begin with the raw amino-acid sequence, 603 residues long: DNA mismatch repair protein MutL (603 aa).

The segment covering 336-346 has biased composition (basic and acidic residues); sequence EVSKKQKEQQK. The tract at residues 336–372 is disordered; the sequence is EVSKKQKEQQKSEQIQMSFEENRQPKEPPTLFSKPNI.

It belongs to the DNA mismatch repair MutL/HexB family.

Its function is as follows. This protein is involved in the repair of mismatches in DNA. It is required for dam-dependent methyl-directed DNA mismatch repair. May act as a 'molecular matchmaker', a protein that promotes the formation of a stable complex between two or more DNA-binding proteins in an ATP-dependent manner without itself being part of a final effector complex. This chain is DNA mismatch repair protein MutL, found in Listeria innocua serovar 6a (strain ATCC BAA-680 / CLIP 11262).